The primary structure comprises 224 residues: Flagellar L-ring protein (224 aa).

The signal sequence occupies residues 1-15 (MARYFILAVALLLTA). Residue Cys16 is the site of N-palmitoyl cysteine attachment. The S-diacylglycerol cysteine moiety is linked to residue Cys16.

The protein belongs to the FlgH family. In terms of assembly, the basal body constitutes a major portion of the flagellar organelle and consists of four rings (L,P,S, and M) mounted on a central rod.

It localises to the cell outer membrane. Its subcellular location is the bacterial flagellum basal body. In terms of biological role, assembles around the rod to form the L-ring and probably protects the motor/basal body from shearing forces during rotation. The sequence is that of Flagellar L-ring protein from Shewanella sp. (strain MR-7).